The following is a 188-amino-acid chain: Elongation factor P (188 aa).

The residue at position 34 (lysine 34) is an N6-(3,6-diaminohexanoyl)-5-hydroxylysine.

The protein belongs to the elongation factor P family. May be beta-lysylated on the epsilon-amino group of Lys-34 by the combined action of EpmA and EpmB, and then hydroxylated on the C5 position of the same residue by EpmC (if this protein is present). Lysylation is critical for the stimulatory effect of EF-P on peptide-bond formation. The lysylation moiety may extend toward the peptidyltransferase center and stabilize the terminal 3-CCA end of the tRNA. Hydroxylation of the C5 position on Lys-34 may allow additional potential stabilizing hydrogen-bond interactions with the P-tRNA.

It is found in the cytoplasm. The protein operates within protein biosynthesis; polypeptide chain elongation. Functionally, involved in peptide bond synthesis. Alleviates ribosome stalling that occurs when 3 or more consecutive Pro residues or the sequence PPG is present in a protein, possibly by augmenting the peptidyl transferase activity of the ribosome. Modification of Lys-34 is required for alleviation. The protein is Elongation factor P of Histophilus somni (strain 129Pt) (Haemophilus somnus).